The primary structure comprises 350 residues: Probable dual-specificity RNA methyltransferase RlmN (350 aa).

The active-site Proton acceptor is the E93. The Radical SAM core domain maps to 99 to 327 (SSKRLTVCVS…VSVRYSRGVQ (229 aa)). C106 and C332 are disulfide-bonded. Residues C113, C117, and C120 each contribute to the [4Fe-4S] cluster site. S-adenosyl-L-methionine is bound by residues 160–161 (GE), S190, 213–215 (SLH), and N289. The active-site S-methylcysteine intermediate is C332.

This sequence belongs to the radical SAM superfamily. RlmN family. Requires [4Fe-4S] cluster as cofactor.

The protein localises to the cytoplasm. The enzyme catalyses adenosine(2503) in 23S rRNA + 2 reduced [2Fe-2S]-[ferredoxin] + 2 S-adenosyl-L-methionine = 2-methyladenosine(2503) in 23S rRNA + 5'-deoxyadenosine + L-methionine + 2 oxidized [2Fe-2S]-[ferredoxin] + S-adenosyl-L-homocysteine. It catalyses the reaction adenosine(37) in tRNA + 2 reduced [2Fe-2S]-[ferredoxin] + 2 S-adenosyl-L-methionine = 2-methyladenosine(37) in tRNA + 5'-deoxyadenosine + L-methionine + 2 oxidized [2Fe-2S]-[ferredoxin] + S-adenosyl-L-homocysteine. Its function is as follows. Specifically methylates position 2 of adenine 2503 in 23S rRNA and position 2 of adenine 37 in tRNAs. The sequence is that of Probable dual-specificity RNA methyltransferase RlmN from Synechocystis sp. (strain ATCC 27184 / PCC 6803 / Kazusa).